The chain runs to 195 residues: 4'-phosphopantetheinyl transferase AcpT (195 aa).

The protein belongs to the P-Pant transferase superfamily. Gsp/Sfp/HetI/AcpT family.

The catalysed reaction is apo-[ACP] + CoA = holo-[ACP] + adenosine 3',5'-bisphosphate + H(+). In terms of biological role, may be involved in an alternative pathway for phosphopantetheinyl transfer and holo-ACP synthesis in E.coli. The native apo-protein substrate is unknown. Is able to functionally replace AcpS in vivo but only when expressed at high levels. The sequence is that of 4'-phosphopantetheinyl transferase AcpT (acpT) from Escherichia coli O157:H7.